We begin with the raw amino-acid sequence, 423 residues long: Mannose-6-phosphate isomerase (423 aa).

A2 is subject to N-acetylalanine. Phosphoserine is present on residues S102 and S108. Positions 110, 112, 137, and 276 each coordinate Zn(2+). R295 is a catalytic residue.

The protein belongs to the mannose-6-phosphate isomerase type 1 family. Zn(2+) serves as cofactor.

The protein resides in the cytoplasm. The enzyme catalyses D-mannose 6-phosphate = D-fructose 6-phosphate. Its pathway is nucleotide-sugar biosynthesis; GDP-alpha-D-mannose biosynthesis; alpha-D-mannose 1-phosphate from D-fructose 6-phosphate: step 1/2. Its function is as follows. Isomerase that catalyzes the interconversion of fructose-6-P and mannose-6-P and has a critical role in the supply of D-mannose derivatives required for many eukaryotic glycosylation reactions. This is Mannose-6-phosphate isomerase (MPI) from Macaca fascicularis (Crab-eating macaque).